A 327-amino-acid chain; its full sequence is Asnovolin J 5',6'-dehydrogenase nvfM (327 aa).

Residues 9–29 (VAIVGASGVTGGSIVNGLLAL) traverse the membrane as a helical segment. Residues 13 to 19 (GASGVTG) and lysine 47 contribute to the NADP(+) site. Lysine 130 (proton acceptor) is an active-site residue.

It belongs to the NmrA-type oxidoreductase family.

It is found in the membrane. It catalyses the reaction asnovolin K + AH2 = asnovolin A + A. It carries out the reaction chermesin D methyl ester + AH2 = asnovolin J + A. It functions in the pathway secondary metabolite biosynthesis; terpenoid biosynthesis. Functionally, asnovolin J 5',6'-dehydrogenase; part of the gene cluster that mediates the biosynthesis of novofumigatonin, a heavily oxygenated meroterpenoid containing a unique orthoester moiety. The first step of the pathway is the synthesis of 3,5-dimethylorsellinic acid (DMOA) by the polyketide synthase nvfA via condensation of one acetyl-CoA starter unit with 3 malonyl-CoA units and 2 methylations. DMOA is then converted to farnesyl-DMOA by the farnesyltransferase nvfB. Epoxydation by FAD-dependent monooxygenase nvfK, followed by a protonation-initiated cyclization catalyzed by the terpene cyclase nvfL leads to the production of asnavolin H. The short chain dehydrogenase nvfC then as a 3-OH dehydrogenase of asnovolin H to yield chemesin D. There are two branches to synthesize asnovolin A from chemesin D. In one branch, chemesin D undergoes Baeyer-Villiger oxidation by nvfH, methylation by nvfJ, and enoyl reduction by the nvfM D enoylreductase that reduces the double bond between C-5'and C-6', to form respectively asnovolin I, asnovolin K, and asnovolin A. In the other branch, the methylation precedes the Baeyer-Villiger oxidation and the enoyl reduction to yield asnovolin A via the asnovolin J intermediate. Asnovolin A is further converted to fumigatonoid A by the Fe(II)/2-oxoglutarate-dependent dioxygenase nvfI that catalyzes an endoperoxidation reaction. The alpha/beta hydrolase nvfD then acts as an epimerase that converts fumigatonoid A to its C-5' epimer, which then undergoes spontaneous or nvfD-catalyzed lactonization. The following step utilizes the ketoreductase nvfG to produce fumigatonoid B. The dioxygenase nvfE further converts fumigatonoid B into fumigatonoid C. Finally the Fe(II)/2-oxoglutarate-dependent dioxygenase nvfF catalyzes two rounds of oxidation to transform fumigatonoid C into the end product, novofumigatonin A. The sequence is that of Asnovolin J 5',6'-dehydrogenase nvfM from Aspergillus novofumigatus (strain IBT 16806).